Here is a 391-residue protein sequence, read N- to C-terminus: Sister chromatid cohesion protein DCC1 (391 aa).

This sequence belongs to the DCC1 family. As to quaternary structure, component of the ctf18-RFC complex which consists of ctf18, ctf8, dscc1 and the RFC complex.

It is found in the nucleus. In terms of biological role, loads pcna onto primed templates regulating velocity, spacing and restart activity of replication forks. May couple DNA replication to sister chromatid cohesion. The sequence is that of Sister chromatid cohesion protein DCC1 (dscc1) from Danio rerio (Zebrafish).